Consider the following 216-residue polypeptide: L-fuculose phosphate aldolase (216 aa).

Substrate is bound by residues 28–29, 43–44, and 71–72; these read GN, TG, and SS. Glu73 functions as the Proton donor/acceptor in the catalytic mechanism. Zn(2+) contacts are provided by Glu73, His92, His94, and His155.

The protein belongs to the aldolase class II family. AraD/FucA subfamily. Homotetramer. It depends on Zn(2+) as a cofactor.

It catalyses the reaction L-fuculose 1-phosphate = (S)-lactaldehyde + dihydroxyacetone phosphate. It participates in carbohydrate degradation; L-fucose degradation; L-lactaldehyde and glycerone phosphate from L-fucose: step 3/3. Functionally, involved in the degradation of L-fucose and D-arabinose. Catalyzes the reversible cleavage of L-fuculose 1-phosphate (Fuc1P) to yield dihydroxyacetone phosphate (DHAP) and L-lactaldehyde. The sequence is that of L-fuculose phosphate aldolase from Haemophilus influenzae (strain ATCC 51907 / DSM 11121 / KW20 / Rd).